The following is a 154-amino-acid chain: MSLATLDATQHPNLPASAATLFKAKAQKKLSFEQIAQHIGRNEVATAALFYGQAKASPEDIQKLSELLNISPQVLEEQLSGFPDRGRSVEMPPKEPLIYRLYEIVQNYGYAYKAVLNEKFGDGIMSAISFSTKVEKETDADGNNWAVITLRGKW.

Active-site residues include Arg100, Glu103, and Ser126.

It belongs to the cyanase family.

The enzyme catalyses cyanate + hydrogencarbonate + 3 H(+) = NH4(+) + 2 CO2. Its function is as follows. Catalyzes the reaction of cyanate with bicarbonate to produce ammonia and carbon dioxide. This Aspergillus fumigatus (strain CBS 144.89 / FGSC A1163 / CEA10) (Neosartorya fumigata) protein is Cyanate hydratase.